Here is an 883-residue protein sequence, read N- to C-terminus: Protein argonaute 16 (883 aa).

Positions 254-366 (PVFDFLLTNQ…VPIELCHMVS (113 aa)) constitute a PAZ domain. Residues 535-844 (FLLCVLPERK…AAAQMGQFMK (310 aa)) form the Piwi domain.

The protein belongs to the argonaute family. Ago subfamily.

Functionally, probably involved in the RNA silencing pathway. May bind to short RNAs such as microRNAs (miRNAs) or short interfering RNAs (siRNAs), and represses the translation of mRNAs which are complementary to them. The chain is Protein argonaute 16 (AGO16) from Oryza sativa subsp. japonica (Rice).